The chain runs to 623 residues: Xaa-Pro aminopeptidase 1 (623 aa).

Arg-77 is a binding site for a peptide. Lys-304 carries the N6-acetyllysine modification. His-395 provides a ligand contact to a peptide. Mn(2+)-binding residues include Asp-415, Asp-426, and His-489. A peptide is bound by residues His-489, His-498, and Glu-523. The Mn(2+) site is built by Glu-523 and Glu-537.

This sequence belongs to the peptidase M24B family. As to quaternary structure, homodimer. Mn(2+) serves as cofactor. In terms of tissue distribution, expressed in all tissues tested, including pancreas, heart, muscle, kidney, liver, lung and brain. Highest levels in pancreas.

The protein resides in the cytoplasm. Its subcellular location is the cytosol. It carries out the reaction Release of any N-terminal amino acid, including proline, that is linked to proline, even from a dipeptide or tripeptide.. Its activity is regulated as follows. Inhibited by apstatin and the metal ion chelators EDTA and 1,10-phenanthroline. Partially inhibited by dithiothreitol. Not inhibited by enalaprilat or amastatin. Specifically inhibited by the pseudodipeptide CQ31. Inhibition by CQ31 indirectly activates the CARD8 inflammasome: dipeptide accumulation following PEPD inactivation weaky inhibit dipeptidyl peptidases DDP8 and DPP9, relieving DPP8- and/or DPP9-mediated inhibition of CARD8. In terms of biological role, metalloaminopeptidase that catalyzes the removal of a penultimate prolyl residue from the N-termini of peptides, such as Arg-Pro-Pro. Contributes to the degradation of bradykinin. The sequence is that of Xaa-Pro aminopeptidase 1 from Homo sapiens (Human).